The sequence spans 2631 residues: Cyclic GMP-binding protein C (2631 aa).

LRR repeat units follow at residues T170–L194, W196–L217, Q218–L240, N242–L262, S263–L285, and S287–K308. In terms of domain architecture, Roc spans G323–Q515. GTP is bound by residues G336–T343, D402–Q406, and T458–D461. Positions P523–L741 constitute a COR domain. The 295-residue stretch at V878–T1172 folds into the Protein kinase domain. ATP-binding positions include V884–V892 and K905. D1023 functions as the Proton acceptor in the catalytic mechanism. Residues I1225 to P1250 show a composition bias toward polar residues. Disordered regions lie at residues I1225–T1263 and S1387–V1418. Residues I1251–T1263 are compositionally biased toward low complexity. The 174-residue stretch at S1366 to E1539 folds into the N-terminal Ras-GEF domain. Over residues K1392 to T1404 the composition is skewed to basic and acidic residues. Positions P1620–E1706 constitute a DEP domain. A Ras-GEF domain is found at D1708 to I1971. The interval G1989–N2013 is disordered. An a nucleoside 3',5'-cyclic phosphate-binding site is contributed by G2014–Q2133. 3 disordered regions span residues P2142–L2180, M2192–D2239, and S2263–P2346. Over residues S2144–S2174 the composition is skewed to low complexity. Residues L2212 to S2221 show a composition bias toward pro residues. Residues P2222–T2238 show a composition bias toward low complexity. The span at T2287–S2299 shows a compositional bias: basic and acidic residues. The span at G2321–L2336 shows a compositional bias: polar residues. Residues E2354–N2414 form the GRAM domain. G2490–T2616 provides a ligand contact to a nucleoside 3',5'-cyclic phosphate.

The protein belongs to the protein kinase superfamily. TKL Ser/Thr protein kinase family. ROCO subfamily.

The enzyme catalyses L-seryl-[protein] + ATP = O-phospho-L-seryl-[protein] + ADP + H(+). It carries out the reaction L-threonyl-[protein] + ATP = O-phospho-L-threonyl-[protein] + ADP + H(+). In terms of biological role, promotes the exchange of Ras-bound GDP by GTP. Required for cyclic GMP-mediated chemotaxis, polarity. Plays a key role in cyclic AMP-induced myosin II translocation to the cortex. Also involved in the phosphorylation of mlkA and mlcR, either directly or via an intermediate kinase. The protein is Cyclic GMP-binding protein C (gbpC) of Dictyostelium discoideum (Social amoeba).